A 299-amino-acid polypeptide reads, in one-letter code: Cytosolic sulfotransferase 1 (299 aa).

51-56 (KAGTTW) is a binding site for 3'-phosphoadenylyl sulfate. Catalysis depends on His-113, which acts as the Proton acceptor. Residues Arg-135, Ser-143, Tyr-199, 233 to 238 (VQFDAM), and 261 to 263 (RKG) each bind 3'-phosphoadenylyl sulfate.

The protein belongs to the sulfotransferase 1 family. As to expression, expressed in liver.

Its subcellular location is the cytoplasm. Inhibited by Co(2+), Zn(2+), Cd(2+) and Pb(2+) ions. Inactivated by Hg(2+) and Cu(2+) ions. In terms of biological role, sulfotransferase that utilizes 3'-phospho-5'-adenylyl sulfate (PAPS) as sulfonate donor to catalyze the sulfate conjugation of a variety of xenobiotic and endogenous compounds, including 2-naphthol, hydroxychlorobiphenyls, dopamine and T3 (triiodo-L-thyronine). This is Cytosolic sulfotransferase 1 from Danio rerio (Zebrafish).